A 400-amino-acid polypeptide reads, in one-letter code: Nicotinate phosphoribosyltransferase (400 aa).

H220 is subject to Phosphohistidine; by autocatalysis.

This sequence belongs to the NAPRTase family. Post-translationally, transiently phosphorylated on a His residue during the reaction cycle. Phosphorylation strongly increases the affinity for substrates and increases the rate of nicotinate D-ribonucleotide production. Dephosphorylation regenerates the low-affinity form of the enzyme, leading to product release.

The enzyme catalyses nicotinate + 5-phospho-alpha-D-ribose 1-diphosphate + ATP + H2O = nicotinate beta-D-ribonucleotide + ADP + phosphate + diphosphate. It participates in cofactor biosynthesis; NAD(+) biosynthesis; nicotinate D-ribonucleotide from nicotinate: step 1/1. Its function is as follows. Catalyzes the synthesis of beta-nicotinate D-ribonucleotide from nicotinate and 5-phospho-D-ribose 1-phosphate at the expense of ATP. The polypeptide is Nicotinate phosphoribosyltransferase (Salmonella typhi).